The primary structure comprises 236 residues: Eukaryotic translation initiation factor 3 subunit J (236 aa).

Residues methionine 1–leucine 88 are disordered. Acidic residues predominate over residues glycine 28–lysine 46. 2 stretches are compositionally biased toward basic and acidic residues: residues aspartate 47 to alanine 58 and alanine 68 to glutamate 77.

The protein belongs to the eIF-3 subunit J family. In terms of assembly, component of the eukaryotic translation initiation factor 3 (eIF-3) complex. The eIF-3 complex interacts with pix.

It is found in the cytoplasm. Component of the eukaryotic translation initiation factor 3 (eIF-3) complex, which is involved in protein synthesis of a specialized repertoire of mRNAs and, together with other initiation factors, stimulates binding of mRNA and methionyl-tRNAi to the 40S ribosome. The eIF-3 complex specifically targets and initiates translation of a subset of mRNAs involved in cell proliferation. The protein is Eukaryotic translation initiation factor 3 subunit J of Drosophila erecta (Fruit fly).